Here is a 311-residue protein sequence, read N- to C-terminus: ATP synthase subunit a (311 aa).

A run of 6 helical transmembrane segments spans residues 62 to 82 (AVHV…GFFM), 123 to 143 (VAPM…MDLI), 179 to 199 (VTVF…WGFI), 213 to 233 (FWYF…VALI), 253 to 273 (IFIL…LGGI), and 276 to 296 (FGWA…FMVL).

Belongs to the ATPase A chain family. In terms of assembly, F-type ATPases have 2 components, CF(1) - the catalytic core - and CF(0) - the membrane proton channel. CF(1) has five subunits: alpha(3), beta(3), gamma(1), delta(1), epsilon(1). CF(0) has three main subunits: a(1), b(2) and c(9-12). The alpha and beta chains form an alternating ring which encloses part of the gamma chain. CF(1) is attached to CF(0) by a central stalk formed by the gamma and epsilon chains, while a peripheral stalk is formed by the delta and b chains.

It is found in the cell inner membrane. Functionally, key component of the proton channel; it plays a direct role in the translocation of protons across the membrane. This chain is ATP synthase subunit a, found in Teredinibacter turnerae (strain ATCC 39867 / T7901).